The following is a 397-amino-acid chain: 2-aminoadipate transaminase (397 aa).

Gly40 provides a ligand contact to substrate. Pyridoxal 5'-phosphate is bound by residues Tyr70, 100-101 (SQ), Asn174, 202-205 (DDAY), 235-237 (SFS), and Arg245. Asn174 is a binding site for substrate. Lys263 carries the post-translational modification N6-(pyridoxal phosphate)lysine. Position 368 (Arg368) interacts with substrate.

The protein belongs to the class-I pyridoxal-phosphate-dependent aminotransferase family. Homodimer. Requires pyridoxal 5'-phosphate as cofactor.

The catalysed reaction is L-2-aminoadipate + 2-oxoglutarate = 2-oxoadipate + L-glutamate. The protein operates within amino-acid biosynthesis; L-lysine biosynthesis via AAA pathway; L-alpha-aminoadipate from 2-oxoglutarate: step 5/5. Its function is as follows. Catalyzes the transfer of an amino group between 2-oxoadipate (2-OA) and glutamate (Glu) to yield alpha-aminodipate (AAA). It can also transaminate glutamate, leucine, and aromatic amino acids. It also contributes in the biosynthesis of other amino acids such as leucine. This is 2-aminoadipate transaminase (lysN) from Thermus thermophilus (strain ATCC BAA-163 / DSM 7039 / HB27).